The primary structure comprises 226 residues: uncharacterized protein (226 aa).

The protein belongs to the SSM1 family.

This is an uncharacterized protein from Schizosaccharomyces pombe (strain 972 / ATCC 24843) (Fission yeast).